The sequence spans 403 residues: S-adenosylmethionine synthase (403 aa).

His17 serves as a coordination point for ATP. Asp19 is a binding site for Mg(2+). A K(+)-binding site is contributed by Glu45. Residues Glu58 and Gln104 each coordinate L-methionine. Residues 104–114 (QSPDIAQGVDT) are flexible loop. ATP is bound by residues 179–181 (DGK), 250–251 (KF), Asp259, 265–266 (RK), Ala282, and Lys286. Asp259 contacts L-methionine. Lys290 provides a ligand contact to L-methionine.

It belongs to the AdoMet synthase family. Homotetramer; dimer of dimers. It depends on Mg(2+) as a cofactor. K(+) is required as a cofactor.

Its subcellular location is the cytoplasm. The catalysed reaction is L-methionine + ATP + H2O = S-adenosyl-L-methionine + phosphate + diphosphate. Its pathway is amino-acid biosynthesis; S-adenosyl-L-methionine biosynthesis; S-adenosyl-L-methionine from L-methionine: step 1/1. Functionally, catalyzes the formation of S-adenosylmethionine (AdoMet) from methionine and ATP. The overall synthetic reaction is composed of two sequential steps, AdoMet formation and the subsequent tripolyphosphate hydrolysis which occurs prior to release of AdoMet from the enzyme. In Mycobacterium marinum (strain ATCC BAA-535 / M), this protein is S-adenosylmethionine synthase.